A 442-amino-acid polypeptide reads, in one-letter code: tRNA modification GTPase MnmE (442 aa).

Arg-24, Glu-82, and Lys-122 together coordinate (6S)-5-formyl-5,6,7,8-tetrahydrofolate. The region spanning 219–366 is the TrmE-type G domain; sequence GFKVALVGEP…LRRALKREIE (148 aa). Asn-229 serves as a coordination point for K(+). GTP contacts are provided by residues 229-234, 248-254, and 273-276; these read NAGKST, TDIAGTT, and DTAG. Ser-233 serves as a coordination point for Mg(2+). Thr-248, Ile-250, and Thr-253 together coordinate K(+). Thr-254 serves as a coordination point for Mg(2+). A (6S)-5-formyl-5,6,7,8-tetrahydrofolate-binding site is contributed by Lys-442.

The protein belongs to the TRAFAC class TrmE-Era-EngA-EngB-Septin-like GTPase superfamily. TrmE GTPase family. Homodimer. Heterotetramer of two MnmE and two MnmG subunits. K(+) serves as cofactor.

Its subcellular location is the cytoplasm. In terms of biological role, exhibits a very high intrinsic GTPase hydrolysis rate. Involved in the addition of a carboxymethylaminomethyl (cmnm) group at the wobble position (U34) of certain tRNAs, forming tRNA-cmnm(5)s(2)U34. In Agrobacterium fabrum (strain C58 / ATCC 33970) (Agrobacterium tumefaciens (strain C58)), this protein is tRNA modification GTPase MnmE.